A 208-amino-acid chain; its full sequence is 3-demethoxyubiquinol 3-hydroxylase (208 aa).

The Fe cation site is built by Glu-57, Glu-87, His-90, Glu-139, Glu-171, and His-174.

The protein belongs to the COQ7 family. Requires Fe cation as cofactor.

Its subcellular location is the cell membrane. The enzyme catalyses a 5-methoxy-2-methyl-3-(all-trans-polyprenyl)benzene-1,4-diol + AH2 + O2 = a 3-demethylubiquinol + A + H2O. Its pathway is cofactor biosynthesis; ubiquinone biosynthesis. Functionally, catalyzes the hydroxylation of 2-nonaprenyl-3-methyl-6-methoxy-1,4-benzoquinol during ubiquinone biosynthesis. This chain is 3-demethoxyubiquinol 3-hydroxylase, found in Burkholderia lata (strain ATCC 17760 / DSM 23089 / LMG 22485 / NCIMB 9086 / R18194 / 383).